A 379-amino-acid chain; its full sequence is MKILRKTHPLLKIVNHSFIDLPTPSNISSWWNFGSLLGMCLVIQILTGLFLAMHYTSDTATAFSSVAHICRDVNYGWLIRYLHANGASMFFICLFIHVGRGIYYGSYVLSETWNIGIILLLTTMATAFVGYVLPWGQMSFWGATVITNLLSAIPYIGNTLVEWIWGGFSVDKATLTRFFAFHFILPFIITALVLVHLLFLHETGSNNPSGLNSDSDKIPFHPYYTIKDLLGIFLLLMTLMILALFFPDILGDPDNFTPANPLNTPAHIKPEWYFLFAYAILRSIPNKLGGVLALVLSILILATFPLLNTSKQHGLIFRPITQTIYWIFIANLLVLTWIGGQPVEYPFTTIGQIASITYFTIIVIIMPVSNTIENNIIKL.

A run of 4 helical transmembrane segments spans residues 33-53, 77-98, 113-133, and 178-198; these read FGSL…FLAM, WLIR…FIHV, WNIG…GYVL, and FFAF…VHLL. Residues His83 and His97 each coordinate heme b. Heme b is bound by residues His182 and His196. Residue His201 participates in a ubiquinone binding. 4 helical membrane passes run 226–246, 288–308, 320–340, and 347–367; these read IKDL…ALFF, LGGV…PLLN, ITQT…WIGG, and FTTI…IIMP.

Belongs to the cytochrome b family. As to quaternary structure, the cytochrome bc1 complex contains 11 subunits: 3 respiratory subunits (MT-CYB, CYC1 and UQCRFS1), 2 core proteins (UQCRC1 and UQCRC2) and 6 low-molecular weight proteins (UQCRH/QCR6, UQCRB/QCR7, UQCRQ/QCR8, UQCR10/QCR9, UQCR11/QCR10 and a cleavage product of UQCRFS1). This cytochrome bc1 complex then forms a dimer. Requires heme b as cofactor.

The protein localises to the mitochondrion inner membrane. Functionally, component of the ubiquinol-cytochrome c reductase complex (complex III or cytochrome b-c1 complex) that is part of the mitochondrial respiratory chain. The b-c1 complex mediates electron transfer from ubiquinol to cytochrome c. Contributes to the generation of a proton gradient across the mitochondrial membrane that is then used for ATP synthesis. This chain is Cytochrome b (MT-CYB), found in Deltamys kempi (Kemp's grass mouse).